An 843-amino-acid chain; its full sequence is Protein P (843 aa).

A terminal protein domain (TP) region spans residues 1 to 177 (MPLSYPHFRK…FCGSPYSWEQ (177 aa)). The interval 178 to 346 (ELQHGSTSIN…YCLSHIINLL (169 aa)) is spacer. Disordered stretches follow at residues 202–221 (SGIL…FQQS) and 285–310 (TNPS…VPPG). Residues 347 to 690 (EDWGPCYEHG…YMNLYPVARQ (344 aa)) are polymerase/reverse transcriptase domain (RT). A Reverse transcriptase domain is found at 357-600 (QHHIRTPRTP…YTLNFMGYVI (244 aa)). Residues aspartate 429, aspartate 551, and aspartate 552 each coordinate Mg(2+).

Belongs to the hepadnaviridae P protein family.

The catalysed reaction is DNA(n) + a 2'-deoxyribonucleoside 5'-triphosphate = DNA(n+1) + diphosphate. It catalyses the reaction Endonucleolytic cleavage to 5'-phosphomonoester.. Its activity is regulated as follows. Activated by host HSP70 and HSP40 in vitro to be able to bind the epsilon loop of the pgRNA. Because deletion of the RNase H region renders the protein partly chaperone-independent, the chaperones may be needed indirectly to relieve occlusion of the RNA-binding site by this domain. Inhibited by several reverse-transcriptase inhibitors: Lamivudine, Adefovir and Entecavir. Functionally, multifunctional enzyme that converts the viral RNA genome into dsDNA in viral cytoplasmic capsids. This enzyme displays a DNA polymerase activity that can copy either DNA or RNA templates, and a ribonuclease H (RNase H) activity that cleaves the RNA strand of RNA-DNA heteroduplexes in a partially processive 3'- to 5'-endonucleasic mode. Neo-synthesized pregenomic RNA (pgRNA) are encapsidated together with the P protein, and reverse-transcribed inside the nucleocapsid. Initiation of reverse-transcription occurs first by binding the epsilon loop on the pgRNA genome, and is initiated by protein priming, thereby the 5'-end of (-)DNA is covalently linked to P protein. Partial (+)DNA is synthesized from the (-)DNA template and generates the relaxed circular DNA (RC-DNA) genome. After budding and infection, the RC-DNA migrates in the nucleus, and is converted into a plasmid-like covalently closed circular DNA (cccDNA). The activity of P protein does not seem to be necessary for cccDNA generation, and is presumably released from (+)DNA by host nuclear DNA repair machinery. This chain is Protein P, found in Hepatitis B virus genotype F1 (isolate Argentina/sa11/2000) (HBV-F).